The sequence spans 1067 residues: Protein CLEC16A homolog (1067 aa).

An FPL domain is found at 50–199 (LRCIAEILIW…AVRTISLNVY (150 aa)). The chain crosses the membrane as a helical span at residues 333-353 (SIVALFLLSLVFLVVSHAPLV). Residues 409 to 418 (SSSSYALSED) show a composition bias toward low complexity. 4 disordered regions span residues 409 to 434 (SSSS…LDSQ), 837 to 861 (ASSS…PMFS), 876 to 993 (SNSA…SRSH), and 1037 to 1067 (QSSE…IETV). The segment covering 421–432 (VESSSPATTELD) has biased composition (polar residues). Polar residues predominate over residues 876-888 (SNSAGVSRTQMAP). Over residues 917 to 926 (RADHSDRERS) the composition is skewed to basic and acidic residues. Residues 927–947 (PSVSMGSHSSSQSRENSQPRS) are compositionally biased toward low complexity. Basic and acidic residues predominate over residues 951–974 (RSRESSPRMPRPRSEEIPLEDFQH). Residues 975-993 (SRNNSPHSRGNPSPASRSH) show a composition bias toward polar residues. The segment covering 1057 to 1067 (EGRRRGAIETV) has biased composition (basic and acidic residues).

The protein belongs to the CLEC16A/gop-1 family. Interacts with the class C Vps-HOPS complex components; Car, Dor and Vps16a.

The protein resides in the cytoplasmic vesicle. The protein localises to the autophagosome membrane. It localises to the late endosome membrane. It is found in the golgi apparatus membrane. In terms of biological role, required for mitophagy, autophagy and endosome maturation, possibly by acting in multiple membrane trafficking pathways. Required for endosome trafficking and maturation. Functions with the class C Vps-HOPS complex member Vps16a to promote endosomal maturation into degradative late endosomes and lysosomes. In response to starvation, functions at an early stage of autophagy to promote autophagosome growth and efficient autophagy. Essential for the recruitment of lva-positive Golgi elements to autophagosomes. Likely to function by promoting membrane traffic from the Golgi complex to the developing autophagosomes. Also regulates synaptic growth at the neuromuscular junctions (NMJ) by down-regulating BMP signaling. The sequence is that of Protein CLEC16A homolog from Drosophila melanogaster (Fruit fly).